Consider the following 506-residue polypeptide: Histidine ammonia-lyase (506 aa).

The segment at residues 144-146 (ASG) is a cross-link (5-imidazolinone (Ala-Gly)). Ser-145 bears the 2,3-didehydroalanine (Ser) mark.

This sequence belongs to the PAL/histidase family. Post-translationally, contains an active site 4-methylidene-imidazol-5-one (MIO), which is formed autocatalytically by cyclization and dehydration of residues Ala-Ser-Gly.

Its subcellular location is the cytoplasm. The enzyme catalyses L-histidine = trans-urocanate + NH4(+). It participates in amino-acid degradation; L-histidine degradation into L-glutamate; N-formimidoyl-L-glutamate from L-histidine: step 1/3. The chain is Histidine ammonia-lyase from Legionella pneumophila (strain Paris).